We begin with the raw amino-acid sequence, 2327 residues long: MLLGPGHPLSAPALALALTLALLVRSTAPASFFGENHLEVPVPSALTRVDLLLQFSTSQPEALLLLAAGQDDHLLLQLHSGCLQVRLALGQKELKLQTPADTVLSDSAPHTVVLTVSDSWAVLSVDGVLNTSAPIPRASHLKATYGLFVGSSGSLDLPYLKGISRPLRGCLHSAILNGRNLLRPLTSDVHEGCAEEFSAGDEVGLGFSGPHSLAAFPAWSTREEGTLEFTLTTRSQQAPLAFQAGDKRGNFIYVDIFEGHLRAVVEKGQGTMLLRNSVPVADGQPHEVSVHIDVHRLEISVDQYPTRTFNRGVLSYLEPRGSLLLGGLDTEASRHLQEHRLGLAPGAANISLVGCIEDFSVNGRRQGLRDAWLTRDMSAGCRPEEDEYEEEVYGPYETFSTLAPEAWPAMELPEPCIPEPGLPAVFANFTQLLTISPLVVAEGGTAWLEWRHVQPTLDLTEAELRKSQVLFSVSQSARHGDLELDILGAQTRKMFTLLDVVNRKARFVHDGSEDTSDQLMLEVSVTARAPVPSCLRRGQIYILPIQVNPVNDPPRIIFPHGSLMVILEHTQKPLGPEIFQAYDPDSACEGLTFQLLGVSSGVPVEHRDQPGEPATEFSCRELEVGDIVYVHRGGPAQDLTFRVSDGMQASAPATLKVVAVRPAIQILHNTGLHLAQGSAAAILPANLSVETNAVGQDVSVLFRVTGTLQFGELQKQGAGGVEGTEWWDTLAFHQRDVEQGRVRYLSTDPQHHTQDTVEDLILEVQVGQETLSNLSFPVTIQRATVWMLRLEPLHTQNPHQETLTPAHLEASLEEEEEEGSPQPHTFHYELVQAPRRGNLLLQGTRLSDGESFSQSDLQAGRVTYRATMRTSEAADDSFRFRVTSPPHFSPLYTFPIHIGGDPNAPVLTNVLLMVPEGGEGVLSADHLFVKSLNSASYLYEVMEQPHHGKLAWRDPKGKSTPVTSFTNEDLLHGRLVYQHDDSETIEDDIPFVATRQGEGSGDMAWEEVRGVFRVAIQPVNDHAPVQTISRVFHVARGGQRLLTTDDVAFSDADSGFSDAQLVLTRKDLLFGSIVAMEEPTRPIYRFTQEDLRKKQVLFVHSGADHGWLQLQVSDGQHQATAMLEVQASEPYLHVANSSSLVVPQGGQGTIDTAVLQLDTNLDIRSGNEVHYHVTAGPQWGQLLRDGQSVTSFSQRDLLDGAILYSHNGSLSPQDTLAFSVAAGPVHTNTFLQVTIALEGPLAPLQLVQHKKIYVFQGEAAEIRRDQLEVVQEAVLPADIMFSLRSPPNAGYLVMVSHGASAEEPPSLDPVQSFSQEAVNSGRVLYLHSRPGAWSDSFSLDVASGLGDPLEGISVELEVLPTVIPLDVQNFSVPEGGTRTLAPPLVQITGPYFPTLPGLVLQVLEPPQHGALQKEDHSQDGSLSTFSWREVEEQLIRYVHDGSETQTDAFVLLANASEMDRQSQPVAFTITILPVNDQPPVLTTNTGLQIWEGAIVPIPPEALRGTDNDSGPEDLVYTIEQPSNGRIALRVAPDTEVHRFTQAQLDSGLVLFSHRGALEGGFHFDLSDGAHTSPGHFFRVVAQKQALLSLEGTRKLTVCPESVQPLSSQSLSASSSTGADPRHLLYRVVRGPQLGRLLHAQQGSAEEVLVNFTQAEVNAGNILYEHEMSSEPFWEAHDTIGLLLSSPPARDLAATLAVMVSFDAACPQRPSRLWKNKGLWVPEGQRAKITVAALDAANLLASVPASQRSRHDVLFQVTQFPTRGQLLVSEEPLHARRPYFLQSELAAGQLVYAHGGGGTQQDGFRFRAHLQGPTGTSVAGPQTSEAFVITVRDVNERPPQPQASIPLRVTRGSRAPVSRAQLSVVDPDSAPGEIEYEVQRAPHNGFLSLAGDNTGPVTHFTQADVDAGRLAFVANGSSVAGVFQLSMSDGASPPIPMSLAVDVLPSTIEVQLRAPLEVPQALGRTSLSRQQLQVISDREEPDVAYRLTQGPLYGQLLVGGQPASAFSQLQVDQGDVVFVFTNFSSSQDHFKVVALARGVNASATVNVTVQALLHVWAGGPWPQGTTLRLDPTVLDASELANRTGSMPHFRLLAGPRYGRVVRVSQGRTESRSNQLVEHFTQRDLEEGQLGLEVGKPEGRSTGPAGDRLTLELWAKGVPPAVALLDFATEPYHAAKSYSVALLSVPEAVRTETEKPGRSVPTGQPGQAASSPVPTAAKGGFLGFLEANMFSIIIPVCLILLLLALILPLLFYLRKRNKTGKHDVQVLTAKPRNGLAGDTETFRKVEPGQAIPLITVPGQGPPPGGQPDPELLQFCRTPNPALRNGQYWV.

Residues 1–29 form the signal peptide; that stretch reads MLLGPGHPLSAPALALALTLALLVRSTAP. Laminin G-like domains are found at residues 30 to 193 and 203 to 381; these read ASFF…HEGC and VGLG…SAGC. Residues 30–640 form a globular or compact configuration stabilized by disulfide bonds region; sequence ASFFGENHLE…HRGGPAQDLT (611 aa). Residues 30–640 are neurite growth inhibition; it reads ASFFGENHLE…HRGGPAQDLT (611 aa). At 30–2229 the chain is on the extracellular side; sequence ASFFGENHLE…LGFLEANMFS (2200 aa). A glycan (N-linked (GlcNAc...) asparagine) is linked at Asn130. Cys170 and Cys193 are joined by a disulfide. An N-linked (GlcNAc...) asparagine glycan is attached at Asn349. An intrachain disulfide couples Cys355 to Cys381. Residue Asn428 is glycosylated (N-linked (GlcNAc...) asparagine). CSPG repeat units lie at residues 429–524, 554–646, and 663–765; these read FTQL…LEVS, PRII…VSDG, and AIQI…LEVQ. Residues 575–1045 form an interaction with COL6A2 region; the sequence is GPEIFQAYDP…RGGQRLLTTD (471 aa). The interval 632–1451 is interaction with COL5A1; the sequence is RGGPAQDLTF…SETQTDAFVL (820 aa). Residues Asn686 and Asn773 are each glycosylated (N-linked (GlcNAc...) asparagine). CSPG repeat units lie at residues 784–883 and 903–994; these read TVWM…FRVT and NAPV…FVAT. O-linked (Xyl...) (chondroitin sulfate) serine glycosylation occurs at Ser1000. CSPG repeat units lie at residues 1023 to 1115, 1131 to 1221, 1243 to 1342, 1361 to 1454, 1478 to 1568, 1586 to 1684, 1709 to 1808, 1837 to 1929, and 1946 to 2034; these read APVQ…VSDG, YLHV…FSVA, PLQL…LDVA, TVIP…LLAN, PPVL…LSDG, LLSL…LLLS, PSRL…FRAH, PPQP…MSDG, and TIEV…VVAL. 2 N-linked (GlcNAc...) asparagine glycosylation sites follow: Asn1136 and Asn1207. N-linked (GlcNAc...) asparagine glycosylation is found at Asn1369 and Asn1454. A neurite growth inhibition region spans residues 1591-2226; sequence GTRKLTVCPE…GGFLGFLEAN (636 aa). Positions 1592–2226 are cysteine-containing; it reads TRKLTVCPES…GGFLGFLEAN (635 aa). Asn1650 is a glycosylation site (N-linked (GlcNAc...) asparagine). Asn1914, Asn2021, Asn2039, Asn2045, and Asn2080 each carry an N-linked (GlcNAc...) asparagine glycan. The stretch at 2043–2152 is one CSPG 15 repeat; the sequence is TVNVTVQALL…AGDRLTLELW (110 aa). Residues 2190-2210 are disordered; sequence ETEKPGRSVPTGQPGQAASSP. Over residues 2199-2210 the composition is skewed to polar residues; that stretch reads PTGQPGQAASSP. The chain crosses the membrane as a helical span at residues 2230 to 2250; the sequence is IIIPVCLILLLLALILPLLFY. Over 2251-2327 the chain is Cytoplasmic; that stretch reads LRKRNKTGKH…PALRNGQYWV (77 aa). Position 2257 is a phosphothreonine; by PKC/PRKCA (Thr2257). The PDZ-binding motif lies at 2325–2327; sequence YWV.

As to quaternary structure, interacts with ITGA4 through its chondroitin sulfate glycosaminoglycan. Interacts with BCAR1, CDC42 and ACK1. Interacts with MMP16. Interacts with the first PDZ domain of MPDZ. Interacts with PRKCA. Interacts with LGALS3 and the integrin composed of ITGB1 and ITGA3. Binds TNC, laminin-1, COL5A1 and COL6A2. Interacts with PLG and angiostatin. Binds FGF2 and PDGFA. Interacts with GRIP1, GRIP2 and GRIA2. Forms a ternary complex with GRIP1 and GRIA2. In terms of processing, O-glycosylated; contains glycosaminoglycan chondroitin sulfate which are required for proper localization and function in stress fiber formation. Involved in interaction with MMP16 and ITGA4. Phosphorylation by PRKCA regulates its subcellular location and function in cell motility. In terms of tissue distribution, expressed in microcascular pericytes and not endothelial cells.

Its subcellular location is the cell membrane. It is found in the apical cell membrane. The protein resides in the cell projection. It localises to the lamellipodium membrane. The protein localises to the cell surface. Its function is as follows. Proteoglycan playing a role in cell proliferation and migration which stimulates endothelial cells motility during microvascular morphogenesis. May also inhibit neurite outgrowth and growth cone collapse during axon regeneration. Cell surface receptor for collagen alpha 2(VI) which may confer cells ability to migrate on that substrate. Binds through its extracellular N-terminus growth factors, extracellular matrix proteases modulating their activity. May regulate MPP16-dependent degradation and invasion of type I collagen participating in melanoma cells invasion properties. May modulate the plasminogen system by enhancing plasminogen activation and inhibiting angiostatin. Also functions as a signal transducing protein by binding through its cytoplasmic C-terminus scaffolding and signaling proteins. May promote retraction fiber formation and cell polarization through Rho GTPase activation. May stimulate alpha-4, beta-1 integrin-mediated adhesion and spreading by recruiting and activating a signaling cascade through CDC42, ACK1 and BCAR1. May activate FAK and ERK1/ERK2 signaling cascades. This Mus musculus (Mouse) protein is Chondroitin sulfate proteoglycan 4 (Cspg4).